The chain runs to 40 residues: Large ribosomal subunit protein bL36B (40 aa).

It belongs to the bacterial ribosomal protein bL36 family.

This is Large ribosomal subunit protein bL36B from Streptomyces coelicolor (strain ATCC BAA-471 / A3(2) / M145).